The sequence spans 285 residues: MNAVSDLRALHAAQPGWQAALSLGFERRGARTVLATRRHVGPLVVQRALYPEGDGVCHAIVVHPPAGIVGGDALRIDVDLGAGAHALLTTPGAGKWYRSAGARGSLVQRIAVGDGAVCEWLPQESIVYDGAAGDLATEVDIAGDGVFIGSEMTCFGRSGAGERYTRGDFAMRTRIRRDGRTLWLERGRVEGGGALLDSPVGLAGWPVTATLLVAAKTVDAALLEACREVPAEAGEGAATLLPGLLVARYRGPACEPGRNWFNRLWTLLRPPLAGRAATLPRIWHT.

This sequence belongs to the UreD family. In terms of assembly, ureD, UreF and UreG form a complex that acts as a GTP-hydrolysis-dependent molecular chaperone, activating the urease apoprotein by helping to assemble the nickel containing metallocenter of UreC. The UreE protein probably delivers the nickel.

It localises to the cytoplasm. Its function is as follows. Required for maturation of urease via the functional incorporation of the urease nickel metallocenter. The protein is Urease accessory protein UreD of Azoarcus sp. (strain BH72).